Consider the following 359-residue polypeptide: 2-epi-5-epi-valiolone 7-kinase (359 aa).

The segment at 28-48 is disordered; that stretch reads GGLGEVHTTPSPGHARRPGAG.

The protein belongs to the ROK (NagC/XylR) family.

It carries out the reaction 2-epi-5-epi-valiolone + ATP = 2-epi-5-epi-valiolone 7-phosphate + ADP + H(+). Functionally, catalyzes the conversion of 2-epi-5-epi-valiolone to 2-epi-5-epi-valiolone 7-phosphate. Involved in the biosynthesis of the acarviose moiety of the alpha-glucosidase inhibitor acarbose. This is 2-epi-5-epi-valiolone 7-kinase from Actinoplanes sp. (strain ATCC 31044 / CBS 674.73 / SE50/110).